We begin with the raw amino-acid sequence, 135 residues long: uncharacterized protein (135 aa).

This is an uncharacterized protein from Schizosaccharomyces pombe (strain 972 / ATCC 24843) (Fission yeast).